The sequence spans 393 residues: Flavohemoprotein (393 aa).

A Globin domain is found at 1-139; that stretch reads MLSNAQRALI…LADLLIEAEE (139 aa). His-85 serves as a coordination point for heme b. Residues Tyr-95 and Glu-138 each act as charge relay system in the active site. The tract at residues 150–393 is reductase; sequence GGWRGVRRFR…FFGPAAALDA (244 aa). Residues 153 to 256 form the FAD-binding FR-type domain; it reads RGVRRFRVAR…FPPAGDFVLR (104 aa). Residues Tyr-191 and 205–208 contribute to the FAD site; that span reads RNYS. Position 268-273 (268-273) interacts with NADP(+); that stretch reads GVGITP. Residue 384–387 participates in FAD binding; sequence FFGP.

Belongs to the globin family. Two-domain flavohemoproteins subfamily. The protein in the C-terminal section; belongs to the flavoprotein pyridine nucleotide cytochrome reductase family. The cofactor is heme b. FAD is required as a cofactor.

The enzyme catalyses 2 nitric oxide + NADPH + 2 O2 = 2 nitrate + NADP(+) + H(+). The catalysed reaction is 2 nitric oxide + NADH + 2 O2 = 2 nitrate + NAD(+) + H(+). Functionally, is involved in NO detoxification in an aerobic process, termed nitric oxide dioxygenase (NOD) reaction that utilizes O(2) and NAD(P)H to convert NO to nitrate, which protects the bacterium from various noxious nitrogen compounds. Therefore, plays a central role in the inducible response to nitrosative stress. The polypeptide is Flavohemoprotein (Pseudomonas aeruginosa (strain ATCC 15692 / DSM 22644 / CIP 104116 / JCM 14847 / LMG 12228 / 1C / PRS 101 / PAO1)).